Here is a 620-residue protein sequence, read N- to C-terminus: Glutathione-regulated potassium-efflux system protein KefC (620 aa).

The next 12 membrane-spanning stretches (helical) occupy residues 4 to 24 (HTLIQALIYLGSAALIVPIAV), 26 to 46 (LGLGSVLGYLIAGCIIGPWGL), 54 to 74 (SILHFAEIGVVLMLFIIGLEL), 90 to 110 (GALQMVICGGLLGLFCMFLGL), 114 to 134 (VAELIGMTLALSSTAIAMQAM), 149 to 169 (FAVLLFQDIAAIPLVAMIPLL), 178 to 198 (MGAFALSALKVAGALVLVVLL), 218 to 238 (VFSAVALFLVFGFGLLLEEVG), 270 to 290 (GLLLGLFFIGVGMSIDFGTLL), 294 to 314 (LRIVILLLGFLIIKIAMLWLI), 327 to 347 (WFAVLLGQGSEFAFVVFGAAQ), and 359 to 379 (SLTLAVALSMAATPILLVILN). The RCK N-terminal domain maps to 399–518 (QPRVIIAGFG…AGVEKPERET (120 aa)). The segment at 597-620 (GWQGTEEGKHTGNMADEPETKPSS) is disordered.

It belongs to the monovalent cation:proton antiporter 2 (CPA2) transporter (TC 2.A.37) family. KefC subfamily. Homodimer. Interacts with the regulatory subunit KefF.

It is found in the cell inner membrane. Its function is as follows. Pore-forming subunit of a potassium efflux system that confers protection against electrophiles. Catalyzes K(+)/H(+) antiport. The sequence is that of Glutathione-regulated potassium-efflux system protein KefC from Escherichia fergusonii (strain ATCC 35469 / DSM 13698 / CCUG 18766 / IAM 14443 / JCM 21226 / LMG 7866 / NBRC 102419 / NCTC 12128 / CDC 0568-73).